A 105-amino-acid polypeptide reads, in one-letter code: Thioredoxin (105 aa).

In terms of domain architecture, Thioredoxin spans 2-105 (VKLIESKEAF…KLEATITEFA (104 aa)). Residue Lys3 is modified to N6-acetyllysine. N6-succinyllysine is present on Lys8. Active-site nucleophile residues include Cys32 and Cys35. Cys32 and Cys35 are disulfide-bonded. N6-acetyllysine is present on Lys39. 2 positions are modified to S-nitrosocysteine: Cys62 and Cys69. Cys73 carries the S-nitrosocysteine; alternate modification. The residue at position 94 (Lys94) is an N6-acetyllysine; alternate. Position 94 is an N6-succinyllysine; alternate (Lys94).

This sequence belongs to the thioredoxin family. In terms of assembly, homodimer; disulfide-linked. Interacts with TXNIP through the redox-active site. Interacts with MAP3K5 and CASP3. Interacts with APEX1; the interaction stimulates the FOS/JUN AP-1 DNA-binding activity in a redox-dependent manner. In the fully reduced protein, both Cys-69 and Cys-73 are nitrosylated in response to nitric oxide (NO). When two disulfide bonds are present in the protein, only Cys-73 is nitrosylated. Cys-73 can serve as donor for nitrosylation of target proteins.

It localises to the nucleus. Its subcellular location is the cytoplasm. The protein localises to the secreted. Its function is as follows. Participates in various redox reactions through the reversible oxidation of its active center dithiol to a disulfide and catalyzes dithiol-disulfide exchange reactions. Plays a role in the reversible S-nitrosylation of cysteine residues in target proteins, and thereby contributes to the response to intracellular nitric oxide. Nitrosylates the active site Cys of CASP3 in response to nitric oxide (NO), and thereby inhibits caspase-3 activity. Induces the FOS/JUN AP-1 DNA binding activity in ionizing radiation (IR) cells through its oxidation/reduction status and stimulates AP-1 transcriptional activity. In Rattus norvegicus (Rat), this protein is Thioredoxin (Txn).